Reading from the N-terminus, the 208-residue chain is Large ribosomal subunit protein uL3c (208 aa).

The interval 129-165 is disordered; that stretch reads TRGPMTHGSKNHREPGSIGQGSTPGKVHKGKKMAGRL.

Belongs to the universal ribosomal protein uL3 family. Part of the 50S ribosomal subunit.

It localises to the plastid. Its subcellular location is the chloroplast. Its function is as follows. One of the primary rRNA binding proteins, it binds directly near the 3'-end of the 23S rRNA, where it nucleates assembly of the 50S subunit. In Rhodomonas salina (Cryptomonas salina), this protein is Large ribosomal subunit protein uL3c (rpl3).